The primary structure comprises 402 residues: MHLYFYCLILLFVPGGNSLGINSYLKHMSNKPQDHVNRTKTVDSKDLAALPLSSYMLNLYQSFHHSELNHGTEGAPSLPSNHRADIIRSLAAKSFDHGGSRWTLVFDFSSLSQEEEHQLAEVRFDFRAFEGAISAEMEVMVDFLHQSSSCQSISGWCQSYLYVGSLTGTLRSRSSDTWVTFEATDIIHKWFERNEKGKSRYEDREKQLKKLPRAKSAERRYQQQNTEDQQIVMMVYSNISKKERLSGTATLLQDAAHSKYLVVMPGIQTIAHTRRHRRSHIFKEHVMGMKHVPPADSSRTLCRRVDFFVDFKQIGWDSWIIHPMKYNAYRCEGECPSPVNESVKPNNHAYMQSLLNYYVKGKAPEVCCVPIRMSSLSMVYYDHDDIAFQNHEGMIVEECGCQ.

An N-terminal signal peptide occupies residues Met1–Ser18. The propeptide occupies Leu19–Arg278. N-linked (GlcNAc...) asparagine glycans are attached at residues Asn37, Asn238, and Asn340. 3 disulfide bridges follow: Cys302-Cys368, Cys331-Cys399, and Cys335-Cys401.

It belongs to the TGF-beta family. In terms of assembly, homodimer; disulfide-linked. In terms of tissue distribution, during blastula stages, expressed in the endoderm at a higher level dorsally than ventrally. Expressed in the deep cells of the Spemann organizer at the gastrula stage. Expressed in the notochord (a derivative of the organizer) and neural tube during the neural stages.

It is found in the secreted. Cooperation and regulatory loops of multiple nodals are essential for mesendoderm patterning in early embryos. Plays a role in mesoderm formation and may be required for neural development. The sequence is that of Nodal homolog 4-A (nodal4-a) from Xenopus laevis (African clawed frog).